The primary structure comprises 366 residues: Flagellar P-ring protein (366 aa).

Residues 1-20 (MVIKFLSALILLLVTTAAQA) form the signal peptide.

This sequence belongs to the FlgI family. In terms of assembly, the basal body constitutes a major portion of the flagellar organelle and consists of four rings (L,P,S, and M) mounted on a central rod.

The protein resides in the periplasm. Its subcellular location is the bacterial flagellum basal body. Functionally, assembles around the rod to form the L-ring and probably protects the motor/basal body from shearing forces during rotation. The chain is Flagellar P-ring protein from Escherichia coli (strain UTI89 / UPEC).